Here is a 126-residue protein sequence, read N- to C-terminus: Protein ApaG (126 aa).

Residues 2 to 126 (SDPRYQIDVS…FRLAVPGALH (125 aa)) form the ApaG domain.

This chain is Protein ApaG, found in Pseudomonas putida (strain W619).